A 1355-amino-acid chain; its full sequence is NACHT, LRR and PYD domains-containing protein 1 homolog (1355 aa).

The 202-residue stretch at 257–458 (KTVILCGDSG…SVPLLCWMVC (202 aa)) folds into the NACHT domain. ATP is bound at residue 263-270 (GDSGRGKS). The segment at 977–1109 (DSDQWVQVEP…FHAKILQPMF (133 aa)) is ZU5. The region spanning 977–1252 (DSDQWVQVEP…NKTESDLFQS (276 aa)) is the FIIND domain. The interval 1110–1252 (SPKTVLVKLG…NKTESDLFQS (143 aa)) is UPA. A CARD domain is found at 1278–1354 (LIKSVENVDT…NLLNHLPSSD (77 aa)).

The protein belongs to the NLRP family. Interacts with the C-terminal part of nlrp1 (NACHT, LRR and PYD domains-containing protein 1, C-terminus) in absence of pathogens and other damage-associated signals. As to quaternary structure, interacts with the N-terminal part of nlrp1 (NACHT, LRR and PYD domains-containing protein 1, N-terminus) in absence of pathogens and other damage-associated signals. Homomultimer; forms the nlrp1 inflammasome polymeric complex, a filament composed of homopolymers of this form in response to pathogens and other damage-associated signals. The nlrp1 inflammasome polymeric complex associates with pycard/asc. Interacts (via CARD domain) with pycard/asc (via CARD domain); leading to pro-inflammatory caspases (caspa and/or caspb) recruitment. Pro-caspase-a and pro-caspase-b filament formation increases local enzyme concentration, resulting in trans-autocleavage and activation. Active caspa and caspb then processes il1b and il18 precursors, leading to the release of mature cytokines in the extracellular milieu and inflammatory response. Post-translationally, autocatalytically cleaved. Autocatalytic cleavage in FIIND region occurs constitutively, prior to activation signals, and is required for inflammasome activity (IL1B release), possibly by facilitating pro-inflammatory caspases (caspa and/or caspb) binding. Both N- and C-terminal parts remain associated non-covalently. In terms of processing, ubiquitinated in response to pathogen-associated signals, leading to its degradation by the proteasome and subsequent release of the cleaved C-terminal part of the protein (NACHT, LRR and PYD domains-containing protein 1, C-terminus), which polymerizes and forms the nlrp1 inflammasome. As to expression, expressed in adult spleen, head kidney, gill and skin and also in the embryo.

The protein localises to the cytoplasm. It localises to the inflammasome. Its activity is regulated as follows. nlrp1 inflammasome is activated by pathogens and other damage-associated signals: activation promotes ubiquitination and degradation of the N-terminal part, releasing the cleaved C-terminal part of the protein (NACHT, LRR and PYD domains-containing protein 1, C-terminus), which polymerizes and forms the nlrp1 inflammasome. Its function is as follows. Acts as the sensor component of the nlrp1 inflammasome, which mediates inflammasome activation in response to various pathogen-associated signals, leading to subsequent pyroptosis. Inflammasomes are supramolecular complexes that assemble in the cytosol in response to pathogens and other damage-associated signals and play critical roles in innate immunity and inflammation. Acts as a recognition receptor (PRR): recognizes specific pathogens and other damage-associated signals, and mediates the formation of the inflammasome polymeric complex. In response to pathogen-associated signals, the N-terminal part of nlrp1 is degraded by the proteasome, releasing the cleaved C-terminal part of the protein (NACHT, LRR and PYD domains-containing protein 1, C-terminus), which polymerizes to initiate the formation of the inflammasome complex: the inflammasome recruits and activate pro-inflammatory caspases (caspa and/or caspb), leading to pyroptosis. In terms of biological role, constitutes the precursor of the nlrp1 inflammasome, which mediates autoproteolytic processing within the FIIND domain to generate the N-terminal and C-terminal parts, which are associated non-covalently in absence of pathogens and other damage-associated signals. Regulatory part that prevents formation of the nlrp1 inflammasome: in absence of pathogens and other damage-associated signals, interacts with the C-terminal part of nlrp1 (NACHT, LRR and PYD domains-containing protein 1, C-terminus), preventing activation of the nlrp1 inflammasome. In response to pathogen-associated signals, this part is ubiquitinated and degraded by the proteasome, releasing the cleaved C-terminal part of the protein, which polymerizes and forms the nlrp1 inflammasome. Functionally, constitutes the active part of the nlrp1 inflammasome. In absence of pathogens and other damage-associated signals, interacts with the N-terminal part of nlrp1 (NACHT, LRR and PYD domains-containing protein 1, N-terminus), preventing activation of the nlrp1 inflammasome. In response to pathogen-associated signals, the N-terminal part of nlrp1 is degraded by the proteasome, releasing this form, which polymerizes to form the nlrp1 inflammasome complex: the nlrp1 inflammasome complex then directly recruits and activates pro-inflammatory caspases (caspa and/or caspb) activation, leading to subsequent pyroptosis. The protein is NACHT, LRR and PYD domains-containing protein 1 homolog of Danio rerio (Zebrafish).